The following is a 164-amino-acid chain: Putative pre-16S rRNA nuclease (164 aa).

The protein belongs to the YqgF nuclease family.

It localises to the cytoplasm. In terms of biological role, could be a nuclease involved in processing of the 5'-end of pre-16S rRNA. This is Putative pre-16S rRNA nuclease from Caulobacter sp. (strain K31).